Consider the following 260-residue polypeptide: Membrane protein insertase YidC 1 (260 aa).

The signal sequence occupies residues 1–22; the sequence is MLKSYRAVLVSLSLLLVFVLSG. Cysteine 23 carries the N-palmitoyl cysteine lipid modification. Cysteine 23 carries S-diacylglycerol cysteine lipidation. The next 5 helical transmembrane spans lie at 29–49, 52–72, 133–153, 164–184, and 213–233; these read IDAHSTGIWDHYFVYPISFMI, VAHHIPGASFGIAIIIMTLVI, LAGCWPLLIQMPIFSALYYAI, FLWVNLGHADPYHILPIIAAL, and MPAMILFMGFAAPSGLVLYWI.

Belongs to the OXA1/ALB3/YidC family. Type 2 subfamily.

It localises to the cell membrane. Its function is as follows. Required for the insertion and/or proper folding and/or complex formation of integral membrane proteins into the membrane. Involved in integration of membrane proteins that insert both dependently and independently of the Sec translocase complex, as well as at least some lipoproteins. This is Membrane protein insertase YidC 1 from Bacillus anthracis.